The following is a 560-amino-acid chain: MPNQRPLYIPFSGPALLETPLLNKGSAFSSEERDSFNLTGLLPHNIETIEEQSLRAYHQLRSFTTDIDKHIYLRNIQDTNETLFHHLIEQHIEEVMPLIYTPTVGQACEKFSQIYRRKRGLFISYPDRHKIDDMLQNATKQKVKVIVVTDGERILGLGDQGIGGMGIPIGKLALYTACGGISPAYCLPILLDVGTNNQQLLDDPMYMGWRNQRISGDEYNEFVDLFIQAVKRRWPEVLLQFEDFAQENATPLLNRYRDQLCCFNDDIQGTAAVSVGTLIAACLNKGQKLSQQKIAFLGAGSAGCGIAEHIIRQMQREGLTEEQARKQVFMVDRYGLLTDSMTELQKFQAPLVQKESAIESWDKSQKLGLAQVVKQAKITVLFGVSGQKGLFTREVIEALCVNTEHPIVLPLSNPTSRVEATPQEVTSWSRGKAIVATGSPFPNTTFEDQSFEISQCNNSYIFPGIGLGVLAAHATGISDNMLMSASQALADISMEYEKAPGAILPPIKFIREISEKIAYAVALQAIEDKLALPVTAENLERRLKANFWLPRYHNYRRTSF.

The active-site Proton donor is Y100. R153 contributes to the NAD(+) binding site. The active-site Proton acceptor is the K171. A divalent metal cation is bound by residues E242, D243, and D266. 2 residues coordinate NAD(+): D266 and N413.

It belongs to the malic enzymes family. As to quaternary structure, homotetramer. The cofactor is Mg(2+). It depends on Mn(2+) as a cofactor.

It catalyses the reaction (S)-malate + NAD(+) = pyruvate + CO2 + NADH. It carries out the reaction oxaloacetate + H(+) = pyruvate + CO2. This chain is NAD-dependent malic enzyme, found in Psychrobacter arcticus (strain DSM 17307 / VKM B-2377 / 273-4).